A 307-amino-acid chain; its full sequence is Transcriptional repressor scratch 2 (307 aa).

An SNAG domain region spans residues 1-20 (MPRSFLVKKIKGDGFQCSGV). Disordered regions lie at residues 34 to 90 (LPGA…PQSS) and 116 to 148 (GRSR…AGAQ). Residues 124–148 (GGGGDAGGSGDAGGAGGRAGRAGAQ) are compositionally biased toward gly residues. C2H2-type zinc fingers lie at residues 155–177 (HACA…KQTH), 186–208 (RKCP…LLTH), 212–234 (HKCG…MRSH), and 240–262 (FGCA…MQTH). A C2H2-type 5; atypical zinc finger spans residues 268–291 (YRCRQCDKSFALKSYLHKHCEAAC).

This sequence belongs to the snail C2H2-type zinc-finger protein family.

The protein localises to the nucleus. Functionally, may be involved in transcriptional regulation. This chain is Transcriptional repressor scratch 2 (SCRT2), found in Homo sapiens (Human).